Consider the following 491-residue polypeptide: Chromosomal replication initiator protein DnaA (491 aa).

Residues 1-69 (MTTWNKCLKK…TIQEFHDGDL (69 aa)) form a domain I, interacts with DnaA modulators region. A domain II region spans residues 69–154 (LLIEYSNKKF…KDDQEYSFGL (86 aa)). Residues 106–126 (DSEETSLNQEPKKSQKKLSSK) form a disordered region. The segment at 155 to 371 (PLKEKYVFDS…GALNRVLTTS (217 aa)) is domain III, AAA+ region. Gly199, Gly201, Lys202, and Thr203 together coordinate ATP. The segment at 372 to 491 (KFNHKDPTIE…YELLLDKISR (120 aa)) is domain IV, binds dsDNA.

Belongs to the DnaA family. In terms of assembly, oligomerizes as a right-handed, spiral filament on DNA at oriC.

It is found in the cytoplasm. Its function is as follows. Plays an essential role in the initiation and regulation of chromosomal replication. ATP-DnaA binds to the origin of replication (oriC) to initiate formation of the DNA replication initiation complex once per cell cycle. Binds the DnaA box (a 9 base pair repeat at the origin) and separates the double-stranded (ds)DNA. Forms a right-handed helical filament on oriC DNA; dsDNA binds to the exterior of the filament while single-stranded (ss)DNA is stabiized in the filament's interior. The ATP-DnaA-oriC complex binds and stabilizes one strand of the AT-rich DNA unwinding element (DUE), permitting loading of DNA polymerase. After initiation quickly degrades to an ADP-DnaA complex that is not apt for DNA replication. Binds acidic phospholipids. The chain is Chromosomal replication initiator protein DnaA from Francisella philomiragia subsp. philomiragia (strain ATCC 25017 / CCUG 19701 / FSC 153 / O#319-036).